Here is a 200-residue protein sequence, read N- to C-terminus: GSSPCRSVIMTAKAVGVELNKKLLNLQAGEHLKPEFLKINPQHTIPTLVDNGFALWESRAIQVYLVEKYGKTDSLYPKCPKKRAVINQRLYFDMGTLYQSFANYYYPQVFAKAPADPEAFKKIESAFEFLNTFLEGQEYAAGDSLTVADIALVASVSTFEVAGFEISKYANVNKWYENAKKVTPGWSENWAGCLEFKKFF.

The GST N-terminal domain occupies 1–73; sequence GSSPCRSVIM…YLVEKYGKTD (73 aa). Residues S2, 43–45, and 57–59 contribute to the glutathione site; these read HTI and ESR. The GST C-terminal domain occupies 79-200; that stretch reads CPKKRAVINQ…AGCLEFKKFF (122 aa).

This sequence belongs to the GST superfamily. Theta family. In terms of assembly, homodimer.

It carries out the reaction RX + glutathione = an S-substituted glutathione + a halide anion + H(+). The catalysed reaction is 1,1,1-trichloro-2,2-bis(4-chlorophenyl)ethane = 1,1-dichloro-2,2-bis(4-chlorophenyl)ethylene + chloride + H(+). Conjugation of reduced glutathione to a wide number of exogenous and endogenous hydrophobic electrophiles. Has DDT dehydrochlorinase activity. This chain is Glutathione S-transferase 1-1 (GstD1), found in Drosophila mauritiana (Fruit fly).